We begin with the raw amino-acid sequence, 763 residues long: Phosphoglycerol transferase I (763 aa).

A run of 4 helical transmembrane segments spans residues 4–19 (LLSFALFLASVLIYAW), 26–48 (WWFAATLTVLGLFVVLNITLFAS), 76–98 (YILPGIGIVLGLTAVFGALGWIL), and 105–127 (PHHFGYSLLALLLALGSVDASPA).

This sequence belongs to the OpgB family.

It localises to the cell inner membrane. It catalyses the reaction a phosphatidylglycerol + a membrane-derived-oligosaccharide D-glucose = a 1,2-diacyl-sn-glycerol + a membrane-derived-oligosaccharide 6-(glycerophospho)-D-glucose.. Its pathway is glycan metabolism; osmoregulated periplasmic glucan (OPG) biosynthesis. In terms of biological role, transfers a phosphoglycerol residue from phosphatidylglycerol to the membrane-bound nascent glucan backbones. This chain is Phosphoglycerol transferase I, found in Shigella flexneri.